A 323-amino-acid polypeptide reads, in one-letter code: ATP synthase gamma chain (323 aa).

The segment at 215 to 237 is disordered; that stretch reads PAGGPAKEQEQGDEGGHGAPSAA. Residues 221 to 230 show a composition bias toward basic and acidic residues; the sequence is KEQEQGDEGG.

Belongs to the ATPase gamma chain family. In terms of assembly, F-type ATPases have 2 components, CF(1) - the catalytic core - and CF(0) - the membrane proton channel. CF(1) has five subunits: alpha(3), beta(3), gamma(1), delta(1), epsilon(1). CF(0) has three main subunits: a, b and c.

Its subcellular location is the cell inner membrane. In terms of biological role, produces ATP from ADP in the presence of a proton gradient across the membrane. The gamma chain is believed to be important in regulating ATPase activity and the flow of protons through the CF(0) complex. This Sorangium cellulosum (strain So ce56) (Polyangium cellulosum (strain So ce56)) protein is ATP synthase gamma chain.